Here is a 698-residue protein sequence, read N- to C-terminus: Methionine synthase reductase (698 aa).

A Flavodoxin-like domain is found at 5–147; it reads LLLYATQQGQ…VVEPWIAGLW (143 aa). FMN is bound at residue 93 to 124; sequence LLGLGDSEYTYFCNGGKIIDKRLQELGARHFY. Positions 166 to 247 are hinge; that stretch reads ALPVASPASS…ASLNIPGLPP (82 aa). Ser171 and Ser189 each carry phosphoserine. Residues 271–533 form the FAD-binding FR-type domain; it reads DPVFQVPISK…PRTTNSFHLP (263 aa). Lys291 lines the NADP(+) pocket. Residues 451 to 454 and 487 to 490 each bind FAD; these read RPYS and GVCT. Residues 610–611, 624–626, and Asp659 each bind NADP(+); these read SR and YVQ. Trp697 contacts FAD.

In terms of assembly, forms a multiprotein complex with MMACHC, MMADHC and MTR. It depends on FAD as a cofactor. The cofactor is FMN. As to expression, found in all tissues tested, particularly abundant in skeletal muscle.

The protein resides in the cytoplasm. The enzyme catalyses 2 methylcob(III)alamin-[methionine synthase] + 2 S-adenosyl-L-homocysteine + NADP(+) + H(+) = 2 cob(II)alamin-[methionine synthase] + 2 S-adenosyl-L-methionine + NADPH. The catalysed reaction is 2 cob(II)alamin + A + 2 H2O + 2 H(+) = 2 aquacob(III)alamin + AH2. Its function is as follows. Key enzyme in methionine and folate homeostasis responsible for the reactivation of methionine synthase (MTR/MS) activity by catalyzing the reductive methylation of MTR-bound cob(II)alamin. Cobalamin (vitamin B12) forms a complex with MTR to serve as an intermediary in methyl transfer reactions that cycles between MTR-bound methylcob(III)alamin and MTR bound-cob(I)alamin forms, and occasional oxidative escape of the cob(I)alamin intermediate during the catalytic cycle leads to the inactive cob(II)alamin species. The processing of cobalamin in the cytosol occurs in a multiprotein complex composed of at least MMACHC, MMADHC, MTRR and MTR which may contribute to shuttle safely and efficiently cobalamin towards MTR in order to produce methionine. Also necessary for the utilization of methyl groups from the folate cycle, thereby affecting transgenerational epigenetic inheritance. Also acts as a molecular chaperone for methionine synthase by stabilizing apoMTR and incorporating methylcob(III)alamin into apoMTR to form the holoenzyme. Also serves as an aquacob(III)alamin reductase by reducing aquacob(III)alamin to cob(II)alamin; this reduction leads to stimulation of the conversion of apoMTR and aquacob(III)alamin to MTR holoenzyme. This chain is Methionine synthase reductase, found in Homo sapiens (Human).